The chain runs to 229 residues: 5'-methylthioadenosine/S-adenosylhomocysteine nucleosidase (229 aa).

Residue glutamate 12 is the Proton acceptor of the active site. Substrate-binding positions include glycine 78, isoleucine 152, and 173–174 (ME). Aspartate 197 functions as the Proton donor in the catalytic mechanism.

This sequence belongs to the PNP/UDP phosphorylase family. MtnN subfamily.

It catalyses the reaction S-adenosyl-L-homocysteine + H2O = S-(5-deoxy-D-ribos-5-yl)-L-homocysteine + adenine. It carries out the reaction S-methyl-5'-thioadenosine + H2O = 5-(methylsulfanyl)-D-ribose + adenine. The enzyme catalyses 5'-deoxyadenosine + H2O = 5-deoxy-D-ribose + adenine. Its pathway is amino-acid biosynthesis; L-methionine biosynthesis via salvage pathway; S-methyl-5-thio-alpha-D-ribose 1-phosphate from S-methyl-5'-thioadenosine (hydrolase route): step 1/2. Catalyzes the irreversible cleavage of the glycosidic bond in both 5'-methylthioadenosine (MTA) and S-adenosylhomocysteine (SAH/AdoHcy) to adenine and the corresponding thioribose, 5'-methylthioribose and S-ribosylhomocysteine, respectively. Also cleaves 5'-deoxyadenosine, a toxic by-product of radical S-adenosylmethionine (SAM) enzymes, into 5-deoxyribose and adenine. The chain is 5'-methylthioadenosine/S-adenosylhomocysteine nucleosidase from Mannheimia succiniciproducens (strain KCTC 0769BP / MBEL55E).